The primary structure comprises 561 residues: Urocanate hydratase (561 aa).

NAD(+) contacts are provided by residues 52–53, Gln-130, 176–178, Glu-196, Arg-201, 242–243, 263–267, 273–274, and Tyr-322; these read GG, GMG, NA, QTSAH, and YL. The active site involves Cys-410. Gly-492 is an NAD(+) binding site.

It belongs to the urocanase family. NAD(+) serves as cofactor.

It localises to the cytoplasm. It carries out the reaction 4-imidazolone-5-propanoate = trans-urocanate + H2O. The protein operates within amino-acid degradation; L-histidine degradation into L-glutamate; N-formimidoyl-L-glutamate from L-histidine: step 2/3. Functionally, catalyzes the conversion of urocanate to 4-imidazolone-5-propionate. The protein is Urocanate hydratase of Enterobacter sp. (strain 638).